Consider the following 200-residue polypeptide: Pyridoxine/pyridoxamine 5'-phosphate oxidase (200 aa).

FMN-binding positions include 48–53 (RMVLLK), 63–64 (YT), Lys-70, and Gln-92. Residue Lys-53 coordinates substrate. Substrate is bound by residues Tyr-110, Arg-114, and Ser-118. FMN is bound by residues 127 to 128 (QS) and Trp-171. Substrate is bound at residue 177–179 (RLH). Position 181 (Arg-181) interacts with FMN.

This sequence belongs to the pyridoxamine 5'-phosphate oxidase family. In terms of assembly, homodimer. FMN serves as cofactor.

The enzyme catalyses pyridoxamine 5'-phosphate + O2 + H2O = pyridoxal 5'-phosphate + H2O2 + NH4(+). The catalysed reaction is pyridoxine 5'-phosphate + O2 = pyridoxal 5'-phosphate + H2O2. It participates in cofactor metabolism; pyridoxal 5'-phosphate salvage; pyridoxal 5'-phosphate from pyridoxamine 5'-phosphate: step 1/1. It functions in the pathway cofactor metabolism; pyridoxal 5'-phosphate salvage; pyridoxal 5'-phosphate from pyridoxine 5'-phosphate: step 1/1. Catalyzes the oxidation of either pyridoxine 5'-phosphate (PNP) or pyridoxamine 5'-phosphate (PMP) into pyridoxal 5'-phosphate (PLP). This is Pyridoxine/pyridoxamine 5'-phosphate oxidase from Cereibacter sphaeroides (strain ATCC 17023 / DSM 158 / JCM 6121 / CCUG 31486 / LMG 2827 / NBRC 12203 / NCIMB 8253 / ATH 2.4.1.) (Rhodobacter sphaeroides).